The sequence spans 34 residues: MLKMSGWQRQSQNQSWNLRRECSRRKCIFIHHHT.

In terms of assembly, interacts with DDIT3 (isoform 1).

It localises to the nucleus. The protein resides in the cytoplasm. Product of the upstream open reading frame (uORF) of DDIT3/CHOP that is specifically produced in absence of stress, thereby preventing translation of downstream stress effector DDIT3/CHOP. This Homo sapiens (Human) protein is DDIT3 upstream open reading frame protein.